We begin with the raw amino-acid sequence, 481 residues long: MAKLVLSLCFLLFSGCCFAFSFREQPQQNECQIQRLNALKPDNRIESEGGFIETWNPNNKPFQCAGVALSRCTLNRNALRRPSYTNAPQEIYIQQGSGIFGMIFPGCPSTFEEPQQKGQSSRPQDRHQKIYHFREGDLIAVPTGFAYWMYNNEDTPVVAVSLIDTNSFQNQLDQMPRRFYLAGNQEQEFLQYQPQKQQGGTQSQKGKRQQEEENEGGSILSGFAPEFLEHAFVVDRQIVRKLQGENEEEEKGAIVTVKGGLSVISPPTEEQQQRPEEEEKPDCDEKDKHCQSQSRNGIDETICTMRLRHNIGQTSSPDIFNPQAGSITTATSLDFPALSWLKLSAQFGSLRKNAMFVPHYNLNANSIIYALNGRALVQVVNCNGERVFDGELQEGQVLIVPQNFAVAARSQSDNFEYVSFKTNDRPSIGNLAGANSLLNALPEEVIQQTFNLRRQQARQVKNNNPFSFLVPPKESQRRVVA.

An N-terminal signal peptide occupies residues 1 to 21 (MAKLVLSLCFLLFSGCCFAFS). 2 disulfide bridges follow: cysteine 31–cysteine 64 and cysteine 107–cysteine 303. The 205-residue stretch at 36-240 (LNALKPDNRI…AFVVDRQIVR (205 aa)) folds into the Cupin type-1 1 domain. Residues 193–204 (QPQKQQGGTQSQ) are compositionally biased toward low complexity. Disordered stretches follow at residues 193 to 218 (QPQK…EGGS) and 245 to 294 (ENEE…QSQS). Residues 271 to 290 (QQQRPEEEEKPDCDEKDKHC) show a composition bias toward basic and acidic residues. The 150-residue stretch at 309–458 (HNIGQTSSPD…TFNLRRQQAR (150 aa)) folds into the Cupin type-1 2 domain. Residues 472 to 481 (PKESQRRVVA) carry the Vacuolar targeting signal motif. Residues 477 to 481 (RRVVA) constitute a propeptide that is removed on maturation.

The protein belongs to the 11S seed storage protein (globulins) family. As to quaternary structure, hexamer; each subunit is composed of an acidic and a basic chain derived from a single precursor and linked by a disulfide bond. Post-translationally, during soybean germination, seed storage proteins are hydrolyzed by protease/26S proteasome. In terms of tissue distribution, confined to developing seeds.

Its subcellular location is the endoplasmic reticulum. The protein localises to the protein storage vacuole. In terms of biological role, glycinin is the major seed storage protein of soybean. Glycinin basic peptides (GBPs), and, to a lower extent, glycinin exhibit antibacterial activity against Gram-negative and Gram-positive bacteria (e.g. L.monocytogenes, B.subtilis, E.coli and S.enteritidis) by forming pores and aggregating in transmembranes, leading to membrane permeability and, eventually, cell death. This chain is Glycinin G3, found in Glycine max (Soybean).